A 348-amino-acid polypeptide reads, in one-letter code: Phosphoribosylformylglycinamidine cyclo-ligase (348 aa).

This sequence belongs to the AIR synthase family.

The protein localises to the cytoplasm. It catalyses the reaction 2-formamido-N(1)-(5-O-phospho-beta-D-ribosyl)acetamidine + ATP = 5-amino-1-(5-phospho-beta-D-ribosyl)imidazole + ADP + phosphate + H(+). Its pathway is purine metabolism; IMP biosynthesis via de novo pathway; 5-amino-1-(5-phospho-D-ribosyl)imidazole from N(2)-formyl-N(1)-(5-phospho-D-ribosyl)glycinamide: step 2/2. The sequence is that of Phosphoribosylformylglycinamidine cyclo-ligase from Cereibacter sphaeroides (strain ATCC 17025 / ATH 2.4.3) (Rhodobacter sphaeroides).